Here is a 281-residue protein sequence, read N- to C-terminus: Phosphoglycerate mutase-like protein AT74H (281 aa).

The active-site Tele-phosphohistidine intermediate is histidine 17. Catalysis depends on glutamate 109, which acts as the Proton donor/acceptor.

It belongs to the phosphoglycerate mutase family.

In terms of biological role, may play a role in carbohydrates metabolism. The chain is Phosphoglycerate mutase-like protein AT74H from Arabidopsis thaliana (Mouse-ear cress).